Here is a 150-residue protein sequence, read N- to C-terminus: MRLEDIRPQAGSTRRRRRLGRGVSAGQGASCGKGMRGQKARKGGSTRPGFEGGQTPLYRRLPKLKHFPRYRRRLEYTLVNLRALADLPAGSEVSLESLMERGIVTTNDGPLKILGDGEVSVPLTIRAAAITASAKVKVEAAGGRVEILGS.

The disordered stretch occupies residues 1-57; it reads MRLEDIRPQAGSTRRRRRLGRGVSAGQGASCGKGMRGQKARKGGSTRPGFEGGQTPL. The span at 23-35 shows a compositional bias: gly residues; sequence VSAGQGASCGKGM.

The protein belongs to the universal ribosomal protein uL15 family. In terms of assembly, part of the 50S ribosomal subunit.

In terms of biological role, binds to the 23S rRNA. The chain is Large ribosomal subunit protein uL15 from Synechococcus sp. (strain JA-2-3B'a(2-13)) (Cyanobacteria bacterium Yellowstone B-Prime).